A 365-amino-acid chain; its full sequence is Putative F-box/kelch-repeat protein At4g39290 (365 aa).

One can recognise an F-box domain in the interval glutamine 10 to phenylalanine 58. Kelch repeat units follow at residues aspartate 118 to asparagine 165 and lysine 167 to glycine 213.

The polypeptide is Putative F-box/kelch-repeat protein At4g39290 (Arabidopsis thaliana (Mouse-ear cress)).